The following is a 4836-amino-acid chain: MPSESFCLAAQSRLDSKWLKTDIQLAFTRDGLCGLWNEMVKDGEIVYTGTELAQNRELPLRKDDGVDAQSGTKKEDLNDKEKKEEEETPAPVYRAKSILESWVWGRQPDVNELKECLSVLVKEQQALAVQSATTTLSALRLKQRLVILERYFIALNRTVFQENVKVKWKSSSISVPPTEKKSARPTGRGVEGLARVGSRAALSFAFAFLRRAWRSGEDADLCSELLQESLDALRALPEASLFDESTVSSVWLEVVERATRFLRSVVTGDVHGTPGTKGPGGVPLQDQHLALAILLELAVQRGTLSQMLSAILLLLQLWDSGAQETDNERSAQGTSAPLLPLLQRFQSIICSKDVPHTESDMHLLSGPLSPNESFLRYLTLPQDNELAIDLRQTAVVVMAHLDRLATPCMPPLCSSPTSHKGSLQEVIGWGLIGWKYYANVIGPIQCEGLASLGVMQVACAEKRFLILSRNGRVYTQAYNSDMLAPQLVQGLASRNIVKIAAHSDGHHYLALAATGEVYSWGCGDGGRLGHGDTVPLEEPKVISAFSGKQAGKHVVHIACGSTYSAAITAEGELYTWGRGNYGRLGHGSSEDEAIPMLVAGLKGLKVIDVACGSGDAQTLAVTENGQVWSWGDGDYGKLGRGGSDGCKTPKLIEKLQDLDVIKVRCGSQFSIALTKDGQVYSWGKGDNQRLGHGTEEHVRYPKLLEGLQGKKVIDVAAGSTHCLALTEDSEVHSWGSNDQCQHFDTLRVTKPEPTALPGLDSKHIVGIACGPAQSFAWSSCSEWSIGLRVPFVVDICSMTFEQLDLLLRQVSEGMDGTADWPPPQEKECMAVATLNLLRLQLHAAISHQVDPEFLGLGLGSVLLNSLKQTVVTLASSAGVLSTVQSAAQAVLQSGWSVLLPTAEERARALSALLPCTVSGNEVNISPGRRFMIDLLVGSLMADGGLESALNAAITAEIQDIEAKKEAQKEKEIDEQEASASTFHRSRTPLDKDLINTGIYESSGKQCLPLVQLIQQLLRNIASQTVARLKDVARRISSCLDFEQQSCERSASLDLLLRFQRLLISKLYPGEKIGPISDTSSPELMGVGSLLKKYTALVCTHIGDILPVAASIASSSWQHFAEVACVMEGDFTGVLLPELVVSIVLLLSKNASLMQEAGAIPLLGGLLEHLDRFNHLAPGKERDDHEELAWPGIMESFFTGQNCRNNEEVTLIRKADLENHNKDGGFWTVIDGKVYGIKDFQTQSLTGNSILAQFAGEDPVVALEAALQFEDTQESMHAFCVGQYLEPDQEVVTIPDLGSLSSPLIDTERNLGLLLGLHASYLAMSTPLSPVEVECAKWLQSSIFSGGLQTSQIHYSYNEEKDEDHCSSPGGTPISKSRLCSHRWALGDHSQAFLQAIADNNIQDYNVKDFLCQIERYCRQCHLTTPITFPPEHPVEEVGRLLLCCLLKHEDLGHVALSLVHVGTLGIEQVKHRTLPKSVVDVCRVVYQAKCSLIKTHQEQGRSYKEVCAPVIERLRFLFNELRPAVCSDLSIMSKFKLLGSLPRWRRIAQKIIRERRKKRVPKKPESIDSEEKIGNEESDLEEACVLPHSPINVDKRPISMKSPKDKWQPLLNTVTGVHKYKWLKQNVQGLYPQSALLNTIVEFALKEEPVDVEKMRKCLLKQLERAEVRLEGIDTILKLAAKSFLLPSVQYAMFCGWQRLIPEGIDIGEPLTDCLRDVDLIPPFNRMLLEVTFGKLYAWAVQNIRSVLMDASARFKELGIQPVPLQTITNENPAGPSLGTIPQARFLLVMLSMLTLQHGANNLDLLLNSGTLALTQTALRLIGPTCDSVEDDMNASARGASATVLEETRKETAPVQLPVSGPELAAMMKIGTRVMRGVDWKWGDQDGPPPGLGRVIGELGEDGWIRVQWDTGSTNSYRMGKEGKYDLKLVELPVSSQPSAEDSDTEDDSEAEQGERNIHPTAMMLTSVINLLQTLCLSVGVHADIMQSEATKTLCGLLRMLVESGTTDKPAPPDRLVAREQHRSWCTLGFVRSIALTPQACGALSSPRWITLLMKVVEGHAPFTAASLQRQILAVHLLQAVLPSWDKTERARDMKCLVEKLFGFLGSLLTTCSSDVPLLRESTLRKRRARPQASLTATHSSTLAEEVVGLLRTLHSLTQWNGLINKYINSQLCSVTQSYAGKTSERAQLEDYFPDSENLEVGGLMAVLAVIGGIDGRLRLGGQVMHDEFGEGTVTRITPKGRITVQFCDMRMCRVCPLNQLKPLPAVAFSVNNLPFTEPMLSVWAELVNLAGSKLEKHKTKKSAKPAFAGQVDLDLLRSQQLKLYILKAGRALLSHQDKLRQILSQPAVQGTGTLQTDDGAAASPDLGDMSPEGPQPPMILLQQLLSSATQPSPVKAIFDKQELEAAALALCQCLAVESTHPSSPGCEDCSSSEATTPVSVQHIHLARAKKRRQSPAPALPIVVQLMEMGFPRKNIEFALKSLTGTSGNASGLPGVEALVGWLLDHSDVQVTEFSDAETLSDEYSDEEVVEDVDDTPYPVAAGAVVTESQTYKKRADFLSNDDYAVYVRENVQVGMMVRCCRTYEEVCEGDVGKVIKLDRDGLHDLNVQCDWQQKGGTYWVRYIHVELIGYPPPSSSSHIKIGDKVRVKASVTTPKYKWGSVTHQSVGLVKAFSANGKDIIVDFPQQSHWTGLLSEMELVPSIHPGVTCDGCQTFPINGSRFKCRNCDDFDFCETCFKTKKHNTRHTFGRINEPGQSAVFCGRSGKQLKRCHSSQPGMLLDSWSRMVKSLNVSSSVNQASRLIDGSEPCWQSSGSQGKHWIRLEIFPDVLVHRLKMIVDPADSSYMPSLVVVSGGNSLNNLIELKTININQTDTTVPLLSDCAEYHRYIEIAIKQCRSSGIDCKIHGLILLGRIRAEEEDLAAVPFLASDNEEEEDDKGSTGSLIRKKTPGLESTATIRTKVFVWGLNDKDQLGGLKGSKIKVPSFSETLSALNVVQVAGGSKSLFAVTVEGKVYSCGEATNGRLGLGMSSGTVPIPRQITALSSYVVKKVAVHSGGRHATALTVDGKVFSWGEGDDGKLGHFSRMNCDKPRLIEALKTKRIRDIACGSSHSAALTSSGELYTWGLGEYGRLGHGDNTTQLKPKMVKVLLGHRVIQVACGSRDAQTLALTDEGLVFSWGDGDFGKLGRGGSEGCNIPQNIERLNGQGVCQIECGAQFSLALTKSGVVWTWGKGDYFRLGHGSDVHVRKPQVVEGLRGKKIVHVAVGALHCLAVTDSGQVYAWGDNDHGQQGNGTTTVNRKPTLVQGLEGQKITRVACGSSHSVAWTTVDVATPSVHEPVLFQTARDPLGASYLGVPSDADSSSSSNKISGANNCKPNRPSLAKILLSLEGNLAKQQALSHILTALQIMYARDAVVGALMPAGMLAPVECPSFSSSAPASDVSAMASPMHMEDSTLAADLEDRLSPNLWQEKREIVSSEDAVTPSAVTPSAPSASSRPFIPVTDDPGAASIIAETMTKTKEDVESQNKTSGPEPQSLDEFTSLLIPDDTRVVVELLKLSVCSRAGDKGREVLSAVLSGMGTAYPQVADMLLELCVTELEDVATDSQSGRLSSQPVVVESSHPYTDDTSTSGTVKIPGAEGLRVEFDRQCSTERRHDPLTVMDGVNRIVSVRSGREWSDWSSELRIPGDELKWKFISDGSVNGWGWRFTVYPIMPAAGPKDLLSDRCVLSCPSMDLVTCLLDFRLNLTSNRSIVPRLAASLAACAQLSALAASHRMWALQRLRRLLTTEFGQSININRLLGENDGESRALSFTGSALAALVKGLPEALQRQFEYEDPIVRGGKQLLHSPFFKVLVALACDLELDTLPCCAETHKWAWFRRYCMASRVAVALDKRTPLPRLFLDEVAKKIRELMADSESMDVLHESHSIFKREQDEQLVQWMNRRPDDWTLSAGGSGTIYGWGHNHRGQLGGIEGAKVKVPTPCEALATLRPVQLIGGEQTLFAVTADGKLYATGYGAGGRLGIGGTESVSTPTLLESIQHVFIKKVAVNSGGKHCLALSSEGEVYSWGEAEDGKLGHGNRSPCDRPRVIESLRGIEVVDVAAGGAHSACVTAAGDLYTWGKGRYGRLGHSDSEDQLKPKLVEALQGHRVIDIACGSGDAQTLCLTDDDTVWSWGDGDYGKLGRGGSDGCKVPMKIDSLTGLGVVKVECGSQFSVALTKSGAVYTWGKGDYHRLGHGSDDHVRRPRQVQGLQGKKVIAIATGSLHCVCCTEDGEVYTWGDNDEGQLGDGTTNAIQRPRLVAALQGKKVNRVACGSAHTLAWSTSKPASAGKLPAQVPMEYNHLQEIPIIALRNRLLLLHHISELFCPCIPMFDLEGSLDETGLGPSVGFDTLRGILISQGKEAAFRKVVQATMVRDRQHGPVVELNRIQVKRSRSKGGLAGPDGTKSVFGQMCAKMSSFSPDSLLLPHRVWKVKFVGESVDDCGGGYSESIAEICEELQNGLTPLLIVTPNGRDESGANRDCYLLNPATRAPVHCSMFRFLGVLLGIAIRTGSPLSLNLAEPVWKQLAGMSLTIADLSEVDKDFIPGLMYIRDNEATSEEFEAMSLPFTVPSASGQDIQLSSKHTHITLDNRAEYVRLAINYRLHEFDEQVAAVREGMARVVPVPLLSLFTGYELETMVCGSPDIPLHLLKSVATYKGIEPSASLVQWFWEVMESFSNTERSLFLRFVWGRTRLPRTIADFRGRDFVIQVLDKYNPPDHFLPESYTCFFLLKLPRYSCKQVLEEKLKYAIHFCKSIDTDDYARIALTGEPAADDSSEDSDNEDADSFASDSTQDYLTGH.

Residues 58–90 (LPLRKDDGVDAQSGTKKEDLNDKEKKEEEETPA) are disordered. Residues 72 to 85 (TKKEDLNDKEKKEE) show a composition bias toward basic and acidic residues. The residue at position 273 (threonine 273) is a Phosphothreonine. The stretch at 416–462 (PTSHKGSLQEVIGWGLIGWKYYANVIGPIQCEGLASLGVMQVACAEK) is one RCC1 1-1 repeat. The RCC1 1-2 repeat unit spans residues 463-513 (RFLILSRNGRVYTQAYNSDMLAPQLVQGLASRNIVKIAAHSDGHHYLALAA). The stretch at 514–569 (TGEVYSWGCGDGGRLGHGDTVPLEEPKVISAFSGKQAGKHVVHIACGSTYSAAITA) is one RCC1 1-3 repeat. The RCC1 1-4 repeat unit spans residues 570-621 (EGELYTWGRGNYGRLGHGSSEDEAIPMLVAGLKGLKVIDVACGSGDAQTLAV). The RCC1 1-5 repeat unit spans residues 624–675 (NGQVWSWGDGDYGKLGRGGSDGCKTPKLIEKLQDLDVIKVRCGSQFSIALTK). Threonine 648 carries the post-translational modification Phosphothreonine. One copy of the RCC1 1-6 repeat lies at 676 to 727 (DGQVYSWGKGDNQRLGHGTEEHVRYPKLLEGLQGKKVIDVAAGSTHCLALTE). An RCC1 1-7 repeat occupies 729–779 (SEVHSWGSNDQCQHFDTLRVTKPEPTALPGLDSKHIVGIACGPAQSFAWSS). Residues 948-981 (ALNAAITAEIQDIEAKKEAQKEKEIDEQEASAST) adopt a coiled-coil conformation. In terms of domain architecture, Cytochrome b5 heme-binding spans 1208 to 1284 (VTLIRKADLE…MHAFCVGQYL (77 aa)). Phosphoserine is present on serine 1578. Residues 1860–1933 (SGPELAAMMK…KYDLKLVELP (74 aa)) form the MIB/HERC2 domain. Serine 1943 is modified (phosphoserine). Residue threonine 1945 is modified to Phosphothreonine. The segment at 2351–2376 (GTGTLQTDDGAAASPDLGDMSPEGPQ) is disordered. Residue serine 2455 is modified to Phosphoserine. A CPH domain is found at 2555–2631 (RADFLSNDDY…RYIHVELIGY (77 aa)). The ZZ-type zinc finger occupies 2704 to 2756 (HPGVTCDGCQTFPINGSRFKCRNCDDFDFCETCFKTKKHNTRHTFGRINEPGQ). Zn(2+) contacts are provided by cysteine 2709, cysteine 2712, cysteine 2724, cysteine 2727, cysteine 2733, cysteine 2736, histidine 2742, and histidine 2746. The region spanning 2760-2937 (FCGRSGKQLK…ASDNEEEEDD (178 aa)) is the DOC domain. Residues 2928 to 2947 (ASDNEEEEDDKGSTGSLIRK) are disordered. The residue at position 2929 (serine 2929) is a Phosphoserine. An RCC1 2-1 repeat occupies 2959–3010 (RTKVFVWGLNDKDQLGGLKGSKIKVPSFSETLSALNVVQVAGGSKSLFAVTV). One copy of the RCC1 2-2 repeat lies at 3011-3065 (EGKVYSCGEATNGRLGLGMSSGTVPIPRQITALSSYVVKKVAVHSGGRHATALTV). The stretch at 3066–3117 (DGKVFSWGEGDDGKLGHFSRMNCDKPRLIEALKTKRIRDIACGSSHSAALTS) is one RCC1 2-3 repeat. The stretch at 3119–3169 (GELYTWGLGEYGRLGHGDNTTQLKPKMVKVLLGHRVIQVACGSRDAQTLAL) is one RCC1 2-4 repeat. The RCC1 2-5 repeat unit spans residues 3172 to 3223 (EGLVFSWGDGDFGKLGRGGSEGCNIPQNIERLNGQGVCQIECGAQFSLALTK). The stretch at 3225–3275 (GVVWTWGKGDYFRLGHGSDVHVRKPQVVEGLRGKKIVHVAVGALHCLAVTD) is one RCC1 2-6 repeat. The RCC1 2-7 repeat unit spans residues 3276–3327 (SGQVYAWGDNDHGQQGNGTTTVNRKPTLVQGLEGQKITRVACGSSHSVAWTT). 3 disordered regions span residues 3479–3499 (DAVT…RPFI), 3517–3537 (KTKE…QSLD), and 3604–3632 (SQSG…SGTV). A compositionally biased stretch (low complexity) spans 3480-3495 (AVTPSAVTPSAPSASS). 2 stretches are compositionally biased toward polar residues: residues 3604–3613 (SQSGRLSSQP) and 3620–3631 (HPYTDDTSTSGT). The stretch at 3953-4004 (SGTIYGWGHNHRGQLGGIEGAKVKVPTPCEALATLRPVQLIGGEQTLFAVTA) is one RCC1 3-1 repeat. The stretch at 4006-4058 (GKLYATGYGAGGRLGIGGTESVSTPTLLESIQHVFIKKVAVNSGGKHCLALSS) is one RCC1 3-2 repeat. An RCC1 3-3 repeat occupies 4060-4110 (GEVYSWGEAEDGKLGHGNRSPCDRPRVIESLRGIEVVDVAAGGAHSACVTA). Residues 4112 to 4164 (GDLYTWGKGRYGRLGHSDSEDQLKPKLVEALQGHRVIDIACGSGDAQTLCLTD) form an RCC1 3-4 repeat. The RCC1 3-5 repeat unit spans residues 4166–4216 (DTVWSWGDGDYGKLGRGGSDGCKVPMKIDSLTGLGVVKVECGSQFSVALTK). One copy of the RCC1 3-6 repeat lies at 4218–4268 (GAVYTWGKGDYHRLGHGSDDHVRRPRQVQGLQGKKVIAIATGSLHCVCCTE). Residues 4270–4320 (GEVYTWGDNDEGQLGDGTTNAIQRPRLVAALQGKKVNRVACGSAHTLAWST) form an RCC1 3-7 repeat. In terms of domain architecture, HECT spans 4459–4796 (DSLLLPHRVW…IHFCKSIDTD (338 aa)). The Glycyl thioester intermediate role is filled by cysteine 4764. The interval 4806–4836 (EPAADDSSEDSDNEDADSFASDSTQDYLTGH) is disordered. Residues 4808–4822 (AADDSSEDSDNEDAD) are compositionally biased toward acidic residues. Phosphoserine occurs at positions 4812, 4813, and 4816. The residue at position 4829 (threonine 4829) is a Phosphothreonine.

Interacts (when phosphorylated at Thr-4829 and sumoylated) with RNF8 (via FHA domain); this interaction increases after ionising radiation (IR) treatment. Interacts with XPA. Interacts with NEURL4. Via its interaction with NEURL4, may indirectly interact with CCP110 and CEP97. In terms of processing, phosphorylation at Thr-4829 is required for interaction with RNF8. Post-translationally, sumoylated with SUMO1 by PIAS4 in response to double-strand breaks (DSBs), promoting the interaction with RNF8. Highest levels are found in brain and testis with lower levels in heart, lung, liver, skeletal muscle and kidney. Little expression detected in spleen.

It is found in the cytoplasm. The protein resides in the cytoskeleton. Its subcellular location is the microtubule organizing center. It localises to the centrosome. The protein localises to the centriole. It is found in the nucleus. It carries out the reaction S-ubiquitinyl-[E2 ubiquitin-conjugating enzyme]-L-cysteine + [acceptor protein]-L-lysine = [E2 ubiquitin-conjugating enzyme]-L-cysteine + N(6)-ubiquitinyl-[acceptor protein]-L-lysine.. It participates in protein modification; protein ubiquitination. Functionally, E3 ubiquitin-protein ligase that regulates ubiquitin-dependent retention of repair proteins on damaged chromosomes. Recruited to sites of DNA damage in response to ionizing radiation (IR) and facilitates the assembly of UBE2N and RNF8 promoting DNA damage-induced formation of 'Lys-63'-linked ubiquitin chains. Acts as a mediator of binding specificity between UBE2N and RNF8. Involved in the maintenance of RNF168 levels. E3 ubiquitin-protein ligase that promotes the ubiquitination and proteasomal degradation of XPA which influences the circadian oscillation of DNA excision repair activity. By controlling the steady-state expression of the IGF1R receptor, indirectly regulates the insulin-like growth factor receptor signaling pathway. Also modulates iron metabolism by regulating the basal turnover of FBXL5. The polypeptide is E3 ubiquitin-protein ligase HERC2 (Mus musculus (Mouse)).